Here is a 224-residue protein sequence, read N- to C-terminus: Protein FMP52, mitochondrial (224 aa).

Belongs to the FMP52 family.

The protein localises to the mitochondrion outer membrane. The protein is Protein FMP52, mitochondrial (FMP52) of Kluyveromyces lactis (strain ATCC 8585 / CBS 2359 / DSM 70799 / NBRC 1267 / NRRL Y-1140 / WM37) (Yeast).